Here is a 152-residue protein sequence, read N- to C-terminus: MLP-like protein 165 (152 aa).

Belongs to the MLP family.

This chain is MLP-like protein 165 (MLP165), found in Arabidopsis thaliana (Mouse-ear cress).